A 963-amino-acid chain; its full sequence is MDAPWGAGERWLHGAAVDRSGVSLGPPPTPQVNQGTLGPQVAPVAAGEVVKTAGGVCKFSGQRLSWWQAQESCEQQFGHLALQPPDGVLASRLRDPVWVGQREAPLRRPPQRRARTTAVLVFDERTADRAARLRSPLPELAALTACTHVQWDCASPDPAALFSVAAPALPNALQLRAFAEPGGVVRAALVVRGQHAPFLAAFRADGRWHHVCATWEQRGGRWALFSDGRRRAGARGLGAGHPVPSGGILVLGQDQDSLGGGFSVRHALSGNLTDFHLWARALSPAQLHRARACAPPSEGLLFRWDPGALDVTPSLLPTVWVRLLCPVPSEECPTWNPGPRSEGSELCLEPQPFLCCYRTEPYRRLQDAQSWPGQDVISRVNALANDIVLLPDPLSEVHGALSPAEASSFLGLLEHVLAMEMAPLGPAALLAVVRFLKRVVALGAGDPELLLTGPWEQLSQGVVSVASLVLEEQVADTWLSLREVIGGPMALVASVQRLAPLLSTSMTSERPRMRIQHRHAGLSGVTVIHSWFTSRVFQHTLEGPDLEPQAPASSEEANRVQRFLSTQVGSAIISSEVWDVTGEVNVAMTFHLQHRAQSPLFPPHPPSPYTGGAWATTGCSVAALYLDSTACFCNHSTSFAILLQIYEVQRGPEEESLLRTLSFVGCGVSFCALTTTFLLFLVAGVPKSERTTVHKNLTFSLASAEGFLMTSEWAKANEVACVAVTVAMHFLFLVAFSWMLVEGLLLWRKVVAVSMHPGPGMRLYHATGWGVPVGIVAVTLAMLPHDYVAPGHCWLNVHTNAIWAFVGPVLFVLTANTCILARVVMITVSSARRRARMLSPQPCLQQQIWTQIWATVKPVLVLLPVLGLTWLAGILVHLSPAWAYAAVGLNSIQGLYIFLVYAACNEEVRSALQRMAEKKVAEVLRALGVWGGAAKEHSLPFSVLPLFLPPKPSTPRHPLKAPA.

Residues 1-662 (MDAPWGAGER…EEESLLRTLS (662 aa)) lie on the Extracellular side of the membrane. The interval 18 to 38 (DRSGVSLGPPPTPQVNQGTLG) is disordered. The 210-residue stretch at 116 to 325 (TTAVLVFDER…LPTVWVRLLC (210 aa)) folds into the Pentraxin (PTX) domain. Cys-146 and Cys-212 are disulfide-bonded. Asn-271 carries N-linked (GlcNAc...) asparagine glycosylation. The 161-residue stretch at 489–649 (MALVASVQRL…AILLQIYEVQ (161 aa)) folds into the GAIN-B domain. The GPS stretch occupies residues 599–649 (PLFPPHPPSPYTGGAWATTGCSVAALYLDSTACFCNHSTSFAILLQIYEVQ). An intrachain disulfide couples Cys-619 to Cys-633. Asn-634 is a glycosylation site (N-linked (GlcNAc...) asparagine). The helical transmembrane segment at 663 to 683 (FVGCGVSFCALTTTFLLFLVA) threads the bilayer. Over 684–691 (GVPKSERT) the chain is Cytoplasmic. A helical membrane pass occupies residues 692-712 (TVHKNLTFSLASAEGFLMTSE). Residues 713–720 (WAKANEVA) are Extracellular-facing. The helical transmembrane segment at 721–741 (CVAVTVAMHFLFLVAFSWMLV) threads the bilayer. The Cytoplasmic portion of the chain corresponds to 742 to 762 (EGLLLWRKVVAVSMHPGPGMR). A helical transmembrane segment spans residues 763-783 (LYHATGWGVPVGIVAVTLAML). The Extracellular portion of the chain corresponds to 784-800 (PHDYVAPGHCWLNVHTN). A helical membrane pass occupies residues 801-821 (AIWAFVGPVLFVLTANTCILA). Residues 822-857 (RVVMITVSSARRRARMLSPQPCLQQQIWTQIWATVK) lie on the Cytoplasmic side of the membrane. A helical membrane pass occupies residues 858–878 (PVLVLLPVLGLTWLAGILVHL). The Extracellular portion of the chain corresponds to 879–880 (SP). Residues 881-901 (AWAYAAVGLNSIQGLYIFLVY) traverse the membrane as a helical segment. At 902–963 (AACNEEVRSA…TPRHPLKAPA (62 aa)) the chain is on the cytoplasmic side.

It belongs to the G-protein coupled receptor 2 family. Adhesion G-protein coupled receptor (ADGR) subfamily.

The protein resides in the membrane. In terms of biological role, orphan receptor. The protein is Adhesion G protein-coupled receptor D2 (ADGRD2) of Homo sapiens (Human).